A 179-amino-acid polypeptide reads, in one-letter code: Large ribosomal subunit protein uL6 (179 aa).

Belongs to the universal ribosomal protein uL6 family. Part of the 50S ribosomal subunit.

This protein binds to the 23S rRNA, and is important in its secondary structure. It is located near the subunit interface in the base of the L7/L12 stalk, and near the tRNA binding site of the peptidyltransferase center. The protein is Large ribosomal subunit protein uL6 of Trichodesmium erythraeum (strain IMS101).